Here is a 248-residue protein sequence, read N- to C-terminus: Cobalt transport protein CbiM (248 aa).

Residues 1-31 (MLKVIKKYRKFITFLMIGLVYTLAYPATAHA) form the signal peptide. The next 6 membrane-spanning stretches (helical) occupy residues 39–59 (LPPRWCIFWYAVSLPFFIYGL), 75–95 (VMLALCGAFVFVLSSLKLPSV), 107–127 (LGTVLFGPGVMSVLGVIVLLF), 139–159 (TLGANEFSMTIVGPIVGYAVW), 173–195 (LFLCAMFADWSTYVTTAFQLAIV), and 213–233 (IYAITQIPLAIAEGLLTVIVY).

Belongs to the CbiM family. Forms an energy-coupling factor (ECF) transporter complex composed of an ATP-binding protein (A component, CbiO), a transmembrane protein (T component, CbiQ) and 2 possible substrate-capture proteins (S components, CbiM and CbiN) of unknown stoichimetry.

The protein localises to the cell membrane. It participates in cofactor biosynthesis; adenosylcobalamin biosynthesis. Its function is as follows. Part of the energy-coupling factor (ECF) transporter complex CbiMNOQ involved in cobalt import. The sequence is that of Cobalt transport protein CbiM from Limosilactobacillus reuteri (strain DSM 20016) (Lactobacillus reuteri).